A 183-amino-acid chain; its full sequence is Large ribosomal subunit protein uL22 (183 aa).

It belongs to the universal ribosomal protein uL22 family.

This is Large ribosomal subunit protein uL22 (RPL17) from Podocoryna carnea (Hydrozoan).